The chain runs to 228 residues: Ribulose-phosphate 3-epimerase, cytoplasmic isoform (228 aa).

Ser12 is a substrate binding site. Residues His37, Asp39, and His70 each coordinate a divalent metal cation. The Proton acceptor role is filled by Asp39. Residues His70, 150-153 (GFGG), 179-181 (DGG), and 201-202 (GS) contribute to the substrate site. Residue Asp179 participates in a divalent metal cation binding. The active-site Proton donor is the Asp179.

The protein belongs to the ribulose-phosphate 3-epimerase family. Homodimer. Requires Co(2+) as cofactor. Fe(2+) is required as a cofactor. The cofactor is Mn(2+). Zn(2+) serves as cofactor. Predominantly accumulates in roots and seedlings.

Its subcellular location is the cytoplasm. The catalysed reaction is D-ribulose 5-phosphate = D-xylulose 5-phosphate. Its pathway is carbohydrate degradation; pentose phosphate pathway; D-xylulose 5-phosphate from D-ribulose 5-phosphate (non-oxidative stage): step 1/1. Catalyzes the reversible epimerization of D-ribulose 5-phosphate to D-xylulose 5-phosphate. The sequence is that of Ribulose-phosphate 3-epimerase, cytoplasmic isoform from Oryza sativa subsp. japonica (Rice).